The chain runs to 883 residues: Alanine--tRNA ligase (883 aa).

Residues His-562, His-566, Cys-675, and His-679 each contribute to the Zn(2+) site.

This sequence belongs to the class-II aminoacyl-tRNA synthetase family. The cofactor is Zn(2+).

It is found in the cytoplasm. The enzyme catalyses tRNA(Ala) + L-alanine + ATP = L-alanyl-tRNA(Ala) + AMP + diphosphate. Its function is as follows. Catalyzes the attachment of alanine to tRNA(Ala) in a two-step reaction: alanine is first activated by ATP to form Ala-AMP and then transferred to the acceptor end of tRNA(Ala). Also edits incorrectly charged Ser-tRNA(Ala) and Gly-tRNA(Ala) via its editing domain. This Ruegeria sp. (strain TM1040) (Silicibacter sp.) protein is Alanine--tRNA ligase.